The sequence spans 444 residues: Bifunctional protein GlmU (444 aa).

Residues 1–226 form a pyrophosphorylase region; that stretch reads MTDSTHRTTA…EAELAGVNSR (226 aa). UDP-N-acetyl-alpha-D-glucosamine contacts are provided by residues 13-16, lysine 27, glutamine 75, and 80-81; these read LAAG and GT. Residue aspartate 103 participates in Mg(2+) binding. Residues glycine 139, glutamate 153, asparagine 168, and asparagine 224 each contribute to the UDP-N-acetyl-alpha-D-glucosamine site. Asparagine 224 contributes to the Mg(2+) binding site. The segment at 227–247 is linker; it reads SELARAEATLQTRLRNAAMDA. Residues 248–444 form an N-acetyltransferase region; it reads GVTLVAPETV…QSLKARKEQG (197 aa). UDP-N-acetyl-alpha-D-glucosamine-binding residues include arginine 313 and lysine 331. Histidine 343 (proton acceptor) is an active-site residue. UDP-N-acetyl-alpha-D-glucosamine is bound by residues tyrosine 346 and asparagine 357. Residues alanine 360, 366–367, serine 385, alanine 403, and arginine 420 each bind acetyl-CoA; that span reads NY.

In the N-terminal section; belongs to the N-acetylglucosamine-1-phosphate uridyltransferase family. The protein in the C-terminal section; belongs to the transferase hexapeptide repeat family. In terms of assembly, homotrimer. The cofactor is Mg(2+).

The protein localises to the cytoplasm. The catalysed reaction is alpha-D-glucosamine 1-phosphate + acetyl-CoA = N-acetyl-alpha-D-glucosamine 1-phosphate + CoA + H(+). It catalyses the reaction N-acetyl-alpha-D-glucosamine 1-phosphate + UTP + H(+) = UDP-N-acetyl-alpha-D-glucosamine + diphosphate. It participates in nucleotide-sugar biosynthesis; UDP-N-acetyl-alpha-D-glucosamine biosynthesis; N-acetyl-alpha-D-glucosamine 1-phosphate from alpha-D-glucosamine 6-phosphate (route II): step 2/2. Its pathway is nucleotide-sugar biosynthesis; UDP-N-acetyl-alpha-D-glucosamine biosynthesis; UDP-N-acetyl-alpha-D-glucosamine from N-acetyl-alpha-D-glucosamine 1-phosphate: step 1/1. The protein operates within bacterial outer membrane biogenesis; LPS lipid A biosynthesis. Its function is as follows. Catalyzes the last two sequential reactions in the de novo biosynthetic pathway for UDP-N-acetylglucosamine (UDP-GlcNAc). The C-terminal domain catalyzes the transfer of acetyl group from acetyl coenzyme A to glucosamine-1-phosphate (GlcN-1-P) to produce N-acetylglucosamine-1-phosphate (GlcNAc-1-P), which is converted into UDP-GlcNAc by the transfer of uridine 5-monophosphate (from uridine 5-triphosphate), a reaction catalyzed by the N-terminal domain. In Gluconobacter oxydans (strain 621H) (Gluconobacter suboxydans), this protein is Bifunctional protein GlmU.